Here is a 193-residue protein sequence, read N- to C-terminus: uncharacterized protein (193 aa).

This is an uncharacterized protein from Aquifex aeolicus (strain VF5).